The following is a 533-amino-acid chain: Monogalactosyldiacylglycerol synthase 1, chloroplastic (533 aa).

Positions 155 and 189 each coordinate a 1,2-diacyl-sn-glycero-3-phospho-(1'-sn-glycerol). H155 is a UDP binding site. The required for binding to diacyl glycerol stretch occupies residues 192-215 (QLPRSYNFLVKHGTLWKMTYYGTS). UDP-binding positions include R324, F413, I414, 434–438 (GTIAE), and E456.

Belongs to the glycosyltransferase 28 family. In terms of assembly, homodimer. Expressed in roots, stems, leaves, flowers, siliques and seeds.

The protein resides in the plastid. Its subcellular location is the chloroplast inner membrane. It catalyses the reaction a 1,2-diacyl-sn-glycerol + UDP-alpha-D-galactose = a 1,2-diacyl-3-O-(beta-D-galactosyl)-sn-glycerol + UDP + H(+). The catalysed reaction is 1,2-di-(9Z,12Z-octadecadienoyl)-sn-glycerol + UDP-alpha-D-galactose = 1,2-di-(9Z,12Z-octadecadienoyl)-3-beta-D-galactosyl-sn-glycerol + UDP + H(+). It carries out the reaction 1-(9Z-octadecenoyl)-2-hexadecanoyl-sn-glycerol + UDP-alpha-D-galactose = 1-(9Z-octadecenoyl)-2-hexadecanoyl-3-beta-D-galactosyl-sn-glycerol + UDP + H(+). The enzyme catalyses 1,2-di-(9Z-octadecenoyl)-sn-glycerol + UDP-alpha-D-galactose = 1,2-di-(9Z-octadecenoyl)-3-beta-D-galactosyl-sn-glycerol + UDP + H(+). Its activity is regulated as follows. Activated by phosphatidate (PA) and phosphatidylglycerol (PG). Inhibited by galvestine-1. In terms of biological role, involved in the synthesis of the major structural component of photosynthetic membranes. Required for proper thylakoid membrane biogenesis. Does not discriminate between prokaryotic (18:1/16:0) or eukaryotic (18:2/18:2) 1,2-diacylglycerol species, but operates with some preference for the prokaryotic one. Is responsible for most galactolipid synthesis in chloroplasts. Required for the formation of thylakoid membranes and functional photosynthetic electron transport during cotyledons greening in young seedlings. May link galactolipid synthesis with the coordinated transcriptional regulation of chloroplasts and other organelles during cotyledon greening. In Arabidopsis thaliana (Mouse-ear cress), this protein is Monogalactosyldiacylglycerol synthase 1, chloroplastic.